A 120-amino-acid polypeptide reads, in one-letter code: Large ribosomal subunit protein uL18 (120 aa).

Residues M1–G24 form a disordered region. A compositionally biased stretch (basic residues) spans A9–A20.

It belongs to the universal ribosomal protein uL18 family. Part of the 50S ribosomal subunit; part of the 5S rRNA/L5/L18/L25 subcomplex. Contacts the 5S and 23S rRNAs.

Functionally, this is one of the proteins that bind and probably mediate the attachment of the 5S RNA into the large ribosomal subunit, where it forms part of the central protuberance. This Bacillus mycoides (strain KBAB4) (Bacillus weihenstephanensis) protein is Large ribosomal subunit protein uL18.